Consider the following 190-residue polypeptide: Copper-binding lipoprotein NosL (190 aa).

A signal peptide spans 1 to 23; sequence MNALHRIGAGTLLAVLLAFGLTG. The N-palmitoyl cysteine moiety is linked to residue Cys-24. Cys-24 carries S-diacylglycerol cysteine lipidation. A disordered region spans residues 170–190; the sequence is MQHGGMHDHAPNGAHNAHAGH. Over residues 180-190 the composition is skewed to low complexity; sequence PNGAHNAHAGH.

The protein belongs to the NosL family. Monomer.

Its subcellular location is the cell membrane. Its function is as follows. May act as a metallochaperone involved in nitrous oxide reductase assembly. Specifically binds Cu(+). In Stutzerimonas stutzeri (Pseudomonas stutzeri), this protein is Copper-binding lipoprotein NosL.